Consider the following 319-residue polypeptide: Ninja-family protein Os07g0602900 (319 aa).

Disordered regions lie at residues 1–26 (MAAS…EKGG), 69–152 (LPGG…DAMY), and 181–234 (AEAM…LTMR). Residues 70–79 (PGGGGGGAGG) show a composition bias toward gly residues. Positions 105-118 (ERWRRREMQSLKRL) are enriched in basic and acidic residues. The span at 185 to 196 (DTSSSDNASCQN) shows a compositional bias: polar residues. Residues 225–234 (LRTLRSLTMR) show a composition bias toward low complexity.

The protein belongs to the Ninja family.

It is found in the nucleus. The chain is Ninja-family protein Os07g0602900 from Oryza sativa subsp. japonica (Rice).